The primary structure comprises 434 residues: Phosphomethylpyrimidine synthase 2 (434 aa).

Residues M94, Y123, H162, 184–186, 225–228, and E264 each bind substrate; these read SRG and NAMR. H268 is a Zn(2+) binding site. Residue Y291 participates in substrate binding. H332 contacts Zn(2+). 3 residues coordinate [4Fe-4S] cluster: C408, C411, and C415.

Belongs to the ThiC family. Requires [4Fe-4S] cluster as cofactor.

The enzyme catalyses 5-amino-1-(5-phospho-beta-D-ribosyl)imidazole + S-adenosyl-L-methionine = 4-amino-2-methyl-5-(phosphooxymethyl)pyrimidine + CO + 5'-deoxyadenosine + formate + L-methionine + 3 H(+). It participates in cofactor biosynthesis; thiamine diphosphate biosynthesis. In terms of biological role, catalyzes the synthesis of the hydroxymethylpyrimidine phosphate (HMP-P) moiety of thiamine from aminoimidazole ribotide (AIR) in a radical S-adenosyl-L-methionine (SAM)-dependent reaction. This Methanosphaera stadtmanae (strain ATCC 43021 / DSM 3091 / JCM 11832 / MCB-3) protein is Phosphomethylpyrimidine synthase 2.